A 260-amino-acid polypeptide reads, in one-letter code: MVLIRVLANLLILQLSYAQKSSELIIGGDECNINEHRFLVALYTFRSRRFHCGGTLINQEWVLSAARCDRKNIRIKLGMHSTNVTNEDEQRRVPKEKFFCLSSKTYTQWNKDIMLIRLNSPVNNSTHIAPLSLPSNPPFVGSVCRIMGWGTITSPNETYPDVPHCANINLFNYTVCHGAHAGLPATSRTLCAGVLEGGKDTCKGDSGGPLICNGQFQGIVSWGGDPCAQPREPGVYTKVFDHLDWIQNIIAGNTTATCPL.

Residues 1–18 (MVLIRVLANLLILQLSYA) form the signal peptide. The propeptide occupies 19–24 (QKSSEL). The 227-residue stretch at 25–251 (IIGGDECNIN…HLDWIQNIIA (227 aa)) folds into the Peptidase S1 domain. 6 cysteine pairs are disulfide-bonded: Cys31-Cys165, Cys52-Cys68, Cys100-Cys258, Cys144-Cys212, Cys176-Cys191, and Cys202-Cys227. 5 N-linked (GlcNAc...) asparagine glycosylation sites follow: Asn83, Asn123, Asn124, Asn156, and Asn172. Asn253 is a glycosylation site (N-linked (GlcNAc...) asparagine).

This sequence belongs to the peptidase S1 family. Snake venom subfamily. As to expression, expressed by the venom gland.

It is found in the secreted. Its function is as follows. Snake venom serine protease homolog that may act in the hemostasis system of the prey. The protein is Snake venom serine protease homolog KN4 of Trimeresurus stejnegeri (Chinese green tree viper).